The chain runs to 131 residues: Small ribosomal subunit protein bS16 (131 aa).

The tract at residues 87 to 131 (PGAEGTYRVPTANTKPPRIPGGGAAKAVEAPAEAPAEAETPASES) is disordered. The span at 111–131 (AKAVEAPAEAPAEAETPASES) shows a compositional bias: low complexity.

This sequence belongs to the bacterial ribosomal protein bS16 family.

This is Small ribosomal subunit protein bS16 from Kineococcus radiotolerans (strain ATCC BAA-149 / DSM 14245 / SRS30216).